A 462-amino-acid polypeptide reads, in one-letter code: MSKLWGGRFTEEAEAWVEEFGASISFDQQLVNQDINGSIAHVTMLAKQGIVTKEEAEKIKIGLQYLLEEAKQNKLHFSVEAEDIHLNIEKMLIEKIGEVGGKLHTGRSRNDQVATDMHLYLKEKVERIIKATKQLQTVLVHQAENNIETIMPGYTHLQRAQPISFAHHILAYFWMLERDVNRYEDSLKRINISPLGAGALAGTTFPIDREYSAELLGLNGIYENSLDAVSDRDFILEFLSNSSILMMHLSRFCEELILWSSQEFQFIEMSDQYATGSSIMPQKKNPDMAELIRGKTGRVYGNLFSLLTVMKGLPLAYNKDLQEDKEGMFDTVKTVEGCLHIMAGMLETMTVNKEKMGQAVTKDFSNATEIADYLASKGLPFRQAHEIVGKLVLHCTQKGIYLVDVPLETYKEMSLLFEEDLYEVLSPYAAVKRRNSAGGTGFEQIKKALEKAKGLVGEFVGS.

Belongs to the lyase 1 family. Argininosuccinate lyase subfamily.

It localises to the cytoplasm. It carries out the reaction 2-(N(omega)-L-arginino)succinate = fumarate + L-arginine. It functions in the pathway amino-acid biosynthesis; L-arginine biosynthesis; L-arginine from L-ornithine and carbamoyl phosphate: step 3/3. This Bacillus thuringiensis (strain Al Hakam) protein is Argininosuccinate lyase.